Reading from the N-terminus, the 214-residue chain is Adenylate kinase (214 aa).

10-15 (GAGKGT) contributes to the ATP binding site. Residues 30-59 (STGDMLRAAIKAGTELGKQAKSVIDAGQLV) form an NMP region. AMP is bound by residues Thr-31, Arg-36, 57-59 (QLV), 85-88 (GFPR), and Gln-92. Residues 122 to 159 (GRRAHLPSGRTYHNVYNPPKEEGKDDITGEELVVRDDD) form an LID region. Residues Arg-123 and 132–133 (TY) contribute to the ATP site. The AMP site is built by Arg-156 and Arg-167. Lys-200 is a binding site for ATP.

The protein belongs to the adenylate kinase family. In terms of assembly, monomer.

The protein localises to the cytoplasm. It catalyses the reaction AMP + ATP = 2 ADP. Its pathway is purine metabolism; AMP biosynthesis via salvage pathway; AMP from ADP: step 1/1. Functionally, catalyzes the reversible transfer of the terminal phosphate group between ATP and AMP. Plays an important role in cellular energy homeostasis and in adenine nucleotide metabolism. In Vibrio atlanticus (strain LGP32) (Vibrio splendidus (strain Mel32)), this protein is Adenylate kinase.